The primary structure comprises 548 residues: ATP synthase subunit alpha (548 aa).

172 to 179 (GDRKTGKT) contacts ATP.

The protein belongs to the ATPase alpha/beta chains family. In terms of assembly, F-type ATPases have 2 components, CF(1) - the catalytic core - and CF(0) - the membrane proton channel. CF(1) has five subunits: alpha(3), beta(3), gamma(1), delta(1), epsilon(1). CF(0) has three main subunits: a(1), b(2) and c(9-12). The alpha and beta chains form an alternating ring which encloses part of the gamma chain. CF(1) is attached to CF(0) by a central stalk formed by the gamma and epsilon chains, while a peripheral stalk is formed by the delta and b chains.

It is found in the cell membrane. The catalysed reaction is ATP + H2O + 4 H(+)(in) = ADP + phosphate + 5 H(+)(out). In terms of biological role, produces ATP from ADP in the presence of a proton gradient across the membrane. The alpha chain is a regulatory subunit. The protein is ATP synthase subunit alpha of Mycobacteroides abscessus (strain ATCC 19977 / DSM 44196 / CCUG 20993 / CIP 104536 / JCM 13569 / NCTC 13031 / TMC 1543 / L948) (Mycobacterium abscessus).